Reading from the N-terminus, the 331-residue chain is PHD finger protein 11 (331 aa).

The C2HC pre-PHD-type zinc finger occupies 42-78 (KRTCALCPKDVEYNVLYFAQSENIAAHENCLLYSSGL). Residues 108 to 160 (LKCKFCHKRGATVGCDLKNCNKNYHFFCAKKDDAVPQSDGVRGIYKLLCQQHA) form a PHD-type zinc finger.

As to quaternary structure, interacts with BRCA1 and RELA. Highly expressed in T and B-cells, as well as natural killer and mature dendritic cells. Expressed at higher levels in Th1 as compared to Th2 cells. Expressed at low levels in all normal tissues tested, including lung, testis, small intestine, breast, liver and placenta.

Its subcellular location is the nucleus. Functionally, positive regulator of Th1-type cytokine gene expression. This chain is PHD finger protein 11 (PHF11), found in Homo sapiens (Human).